The primary structure comprises 527 residues: MAGLQLAPHLPVGVMFPHNKTEAPGLHSAKHDPYEQSDSSQRPSMGHLRNSFQSKLWSNTEMEQEDEVSTRPKRNVCTKARRHSCPHSAGIRQQGSGNNAQGQGKGLFYLSSPTPRYPKANDQDFIPFRRKRVGVDRAYPLKPMVHRKSHSTSDAGADGDQNGYPRLPDSSEFSDNSFGLRSWVNSSLLASVQAEKVVAELHRTEWTQIQRLEAAGESLQKEIRRKEILLQEKLKKTEEGLRRMQKEKKQAIFQEDRELQRMVLPRRRVRDGDHDTPHKPCLSPEFRSEVFSRNRGEDQTCDQAQENPSPRQLSDYELQKLKRERLMASNSKIRDQDAGPSADAFFQPAEELGSTLQESSRSGTPGSSGSSSSTEEPELAKCSHCGRSFLSLRLQRHSTVCGKMQGSKRKVFDSSRARAKGTELEQYLNWRGPATAKAETPPPPRKSTWRQKHESFIRTLRHARQVQQVIARGGNPSDLPSILPADNPDYVQCPHCSRHFAPKVAERHIPKCKTIKNRPPPPRRHDS.

Disordered regions lie at residues 18-105 (HNKT…GQGK) and 145-170 (VHRK…LPDS). A compositionally biased stretch (polar residues) spans 50–61 (NSFQSKLWSNTE). Positions 71–85 (RPKRNVCTKARRHSC) are enriched in basic residues. Positions 93 to 102 (QQGSGNNAQG) are enriched in low complexity. Residues 207–254 (TQIQRLEAAGESLQKEIRRKEILLQEKLKKTEEGLRRMQKEKKQAIFQ) adopt a coiled-coil conformation. 2 disordered regions span residues 264 to 316 (LPRR…LSDY) and 352 to 379 (LGST…EPEL). Over residues 286–298 (FRSEVFSRNRGED) the composition is skewed to basic and acidic residues. Residues 301–312 (CDQAQENPSPRQ) show a composition bias toward polar residues. Low complexity predominate over residues 358–374 (ESSRSGTPGSSGSSSST). 2 C2HC/C3H-type zinc fingers span residues 378–407 (ELAK…MQGS) and 489–518 (DYVQ…IKNR). Zn(2+) is bound by residues C382, C385, H397, C401, C493, C496, H508, and C512. The tract at residues 507–527 (RHIPKCKTIKNRPPPPRRHDS) is disordered.

This sequence belongs to the ZC2HC1 family. It depends on Zn(2+) as a cofactor.

The polypeptide is Zinc finger C2HC domain-containing protein 1C (Zc2hc1c) (Mus musculus (Mouse)).